A 607-amino-acid chain; its full sequence is uncharacterized protein (607 aa).

This is an uncharacterized protein from Ictalurid herpesvirus 1 (strain Auburn) (IcHV-1).